Consider the following 201-residue polypeptide: Probable nicotinate-nucleotide adenylyltransferase (201 aa).

It belongs to the NadD family.

The catalysed reaction is nicotinate beta-D-ribonucleotide + ATP + H(+) = deamido-NAD(+) + diphosphate. It participates in cofactor biosynthesis; NAD(+) biosynthesis; deamido-NAD(+) from nicotinate D-ribonucleotide: step 1/1. In terms of biological role, catalyzes the reversible adenylation of nicotinate mononucleotide (NaMN) to nicotinic acid adenine dinucleotide (NaAD). The protein is Probable nicotinate-nucleotide adenylyltransferase of Carboxydothermus hydrogenoformans (strain ATCC BAA-161 / DSM 6008 / Z-2901).